A 245-amino-acid chain; its full sequence is Heat shock transcription factor (245 aa).

A DNA-binding region spans residues 17 to 115; that stretch reads KSGFVNRLYR…LISLITRDKS (99 aa). The involved in trimerization stretch occupies residues 130-169; sequence SLQYLASCNYKQQKEINDLKDRIKTLETKYATLYEIISNA.

The protein belongs to the HSF family. In terms of assembly, homotrimer. Homotrimerization increases the affinity of HSF1 to DNA.

The protein resides in the nucleus. Its function is as follows. DNA-binding transcription factor that specifically binds heat shock promoter elements (HSE) and activates transcription. This chain is Heat shock transcription factor, found in Enterocytozoon bieneusi (strain H348) (Microsporidian parasite).